A 190-amino-acid chain; its full sequence is Zinc metalloproteinase/disintegrin (190 aa).

A Peptidase M12B domain is found at 1-11; the sequence is NHNPECIVNEP. A Disintegrin domain is found at 19–105; the sequence is PPVCGNELLE…ECPADVFHKN (87 aa). 6 residues coordinate Ca(2+): V21, N24, L26, E28, E31, and D34. Cystine bridges form between C33/C51, C35/C46, C45/C68, C59/C65, C64/C90, and C77/C97. The D/ECD-tripeptide motif lies at 83–85; that stretch reads ECD. D85, P86, E88, D100, and V101 together coordinate Ca(2+). The propeptide occupies 104–190; the sequence is KNGQPCLDNY…DNSPGQNGPC (87 aa).

Belongs to the venom metalloproteinase (M12B) family. P-III subfamily. In terms of assembly, monomer. Zn(2+) serves as cofactor. In terms of tissue distribution, expressed by the venom gland.

It is found in the secreted. Impairs hemostasis in the envenomed animal. Its function is as follows. Inhibits platelet aggregation induced by ADP, thrombin, platelet-activating factor and collagen. Acts by inhibiting fibrinogen interaction with platelet receptors GPIIb/GPIIIa (ITGA2B/ITGB3). The sequence is that of Zinc metalloproteinase/disintegrin from Gloydius brevicauda (Korean slamosa snake).